A 319-amino-acid chain; its full sequence is Acetyl-coenzyme A carboxylase carboxyl transferase subunit alpha (319 aa).

In terms of domain architecture, CoA carboxyltransferase C-terminal spans R39–E293.

This sequence belongs to the AccA family. Acetyl-CoA carboxylase is a heterohexamer composed of biotin carboxyl carrier protein (AccB), biotin carboxylase (AccC) and two subunits each of ACCase subunit alpha (AccA) and ACCase subunit beta (AccD).

The protein resides in the cytoplasm. The catalysed reaction is N(6)-carboxybiotinyl-L-lysyl-[protein] + acetyl-CoA = N(6)-biotinyl-L-lysyl-[protein] + malonyl-CoA. The protein operates within lipid metabolism; malonyl-CoA biosynthesis; malonyl-CoA from acetyl-CoA: step 1/1. Its function is as follows. Component of the acetyl coenzyme A carboxylase (ACC) complex. First, biotin carboxylase catalyzes the carboxylation of biotin on its carrier protein (BCCP) and then the CO(2) group is transferred by the carboxyltransferase to acetyl-CoA to form malonyl-CoA. This is Acetyl-coenzyme A carboxylase carboxyl transferase subunit alpha from Neisseria meningitidis serogroup C / serotype 2a (strain ATCC 700532 / DSM 15464 / FAM18).